Consider the following 374-residue polypeptide: RNA ligase 1 (374 aa).

Positions 37, 54, and 75 each coordinate ATP. Residue lysine 99 is the N6-AMP-lysine intermediate of the active site. ATP is bound by residues glutamate 159, lysine 240, and lysine 242. Aspartate 272 contacts Mg(2+).

The protein belongs to the Tequatrovirus RNA ligase 1 family. Mg(2+) serves as cofactor.

The catalysed reaction is ATP + (ribonucleotide)n-3'-hydroxyl + 5'-phospho-(ribonucleotide)m = (ribonucleotide)n+m + AMP + diphosphate.. Functionally, involved in countering a host defense mechanism which, following viral infection, activates the host anticodon nuclease and shuts off viral translation. Repairs 5'-PO4 and 3'-OH groups in the cleaved host tRNA. The nick ligation reaction entails three nucleotidyl transfer steps. In the first step, the RNA ligase reacts with ATP in the absence of nucleic acid to form a covalent ligase-AMP intermediate and release pyrophosphate. In step 2, the ligase-AMP binds to the nicked duplex nucleic acid and transfers the adenylate to the 5'-PO4 terminus to form an adenylylated nicked intermediate. In step 3, the RNA ligase directs the attack of the nick 3'-OH on the 5'-phosphoanhydride linkage, resulting in a repaired 3'-5' phosphodiester and release of AMP. This Enterobacteria phage T4 (Bacteriophage T4) protein is RNA ligase 1 (63).